Here is a 73-residue protein sequence, read N- to C-terminus: Putative sulfur carrier protein AF_0556 (73 aa).

The Cysteine persulfide intermediate role is filled by Cys11.

This sequence belongs to the sulfur carrier protein TusA family.

The sequence is that of Putative sulfur carrier protein AF_0556 from Archaeoglobus fulgidus (strain ATCC 49558 / DSM 4304 / JCM 9628 / NBRC 100126 / VC-16).